The sequence spans 554 residues: MPTINVNKVDLERLSNISLSDKIIEDRFPMMGVEVEEIFEEVDKNGKKQKMVQFSINPDRPDYLSVEGLARGFRGFMGITTGIQEFEVLNSDIKVIVEENETRPYVAFALVKNVLMDEFVLESMINLQEKLHWAIGRDRKKLAIGIHDFDKVKAPFTYKEIKGDEIKFVPLGYEDEKMTPREIIEKHEKGIKYAHLIQNDKFPIIVDANGEVLSMPPIINGTLTKVTPTSKNLLIDITGTEKEAVEETLNIIVCALAERRGTIVSVDVNGKKYPDLSLKSRMISVESINKKLGLELNPGEMIQAVKKSGMDALYEDGNLIVKIPAYRNDILHNVDLKEEIAINYGYEKFEGKLPSVATTGSKDPVEKKCNAMSDLMIGLGFYEVMNLTLSNQDTLFEKMNLKVEEKDYIEVLKPASIEHRVLRTSILPLLLETLYINKHHSLPQKIFEIGDCVVIDENDTETDTKCKNIKKIAGAITHPLTNFNEIKSSTEALLREFFEDFEFENYEHPAFIPGRCAKIIKDGKEVGFFGEIHPEVILNFELEHPIVGFEITIE.

The B5 domain occupies 276 to 351 (LSLKSRMISV…INYGYEKFEG (76 aa)). Mg(2+)-binding residues include D329, D335, E338, and E339.

The protein belongs to the phenylalanyl-tRNA synthetase beta subunit family. Type 2 subfamily. Tetramer of two alpha and two beta subunits. The cofactor is Mg(2+).

Its subcellular location is the cytoplasm. It catalyses the reaction tRNA(Phe) + L-phenylalanine + ATP = L-phenylalanyl-tRNA(Phe) + AMP + diphosphate + H(+). The protein is Phenylalanine--tRNA ligase beta subunit of Methanococcus maripaludis (strain C5 / ATCC BAA-1333).